The sequence spans 614 residues: Zinc metalloproteinase-disintegrin-like protein H4 subunit A (614 aa).

The signal sequence occupies residues 1-20 (MIQPLLVVTCLVVFPYQVSS). Positions 21-193 (IILESGNVND…RKASQLVATS (173 aa)) are excised as a propeptide. The residue at position 194 (Glu-194) is a Pyrrolidone carboxylic acid (Glu). Residues 201-397 (KYIELVIVVD…IKSKCIDNKP (197 aa)) form the Peptidase M12B domain. N-linked (GlcNAc...) asparagine glycosylation is present at Asn-220. Cystine bridges form between Cys-312/Cys-392, Cys-352/Cys-376, Cys-354/Cys-359, Cys-408/Cys-437, Cys-419/Cys-432, Cys-421/Cys-427, Cys-431/Cys-454, Cys-445/Cys-451, Cys-450/Cys-476, Cys-463/Cys-483, Cys-470/Cys-502, Cys-495/Cys-507, Cys-514/Cys-564, Cys-529/Cys-575, Cys-542/Cys-552, Cys-559/Cys-601, and Cys-595/Cys-607. His-337 is a Zn(2+) binding site. The Metal-binding signature appears at 337-348 (HELGHNLGMDHD). Glu-338 serves as the catalytic Proton acceptor. His-341 and His-347 together coordinate Zn(2+). The Disintegrin domain maps to 405–491 (PAFCGNYFVE…ECPTDVLQRN (87 aa)). Residues Asn-410, Phe-412, Glu-414, Glu-417, and Asp-420 each contribute to the Ca(2+) site. Asn-433 is a glycosylation site (N-linked (GlcNAc...) asparagine). A D/ECD-tripeptide motif is present at residues 469-471 (ECD). Residues Asp-471 and Asp-486 each coordinate Ca(2+).

Belongs to the venom metalloproteinase (M12B) family. P-III subfamily. In terms of assembly, homodimer; disulfide-linked. Heterodimer of A and B subunits; disulfide-linked. Zn(2+) serves as cofactor. N-glycosylated. In terms of processing, the N-terminus is blocked. In terms of tissue distribution, expressed by the venom gland (at protein level). Expressed by the venom gland.

It is found in the secreted. The proteolytic activity of the heterodimer of A and B subunits requires Zn(2+) and Ca(2+) ions. Its function is as follows. Heterodimer (A and B subunits): Zinc metalloprotease that has fibrinogenolytic and hemorrhagic activities. Cleaves insulin B chain preferably at '40-Tyr-|-Leu-41' bond, but also at '28-Gln-|-His-29' and '34-His-|-Leu-35' bonds. Hydrolyzes effectively isolated extracellular matrix (ECM) bovine fibronectin, and only slightly, basal membrane (BM) proteins human collagen IV and murine laminin, in vitro. Cleaves nidogen-1 (at '350-Ser-|-Phe-351' and '380-Tyr-|-Asn-381' bonds), but not laminin, in a solubilized BM preparation. Hydrolyzes plasma proteins involved in blood coagulation in vitro. It slightly shortens prothrombin time and significantly prolongs thrombin time. Has potent alpha-fibrinogenase activity cleaving human fibrinogen alpha chain at '441-Glu-|-Leu-442' and '539-Glu-|-Phe-540' bonds, and to a lesser extent, beta chain at '52-Lys-|-Arg-53' and '48-Pro-|-Leu-49' bonds, but does not cleave gamma chain. Hydrolyzes bovine prothrombin at '200-Ser-|-Gly-201' bond, but does not activate it, however, it cleaves fragment 1 and prethrombin 1 from it. Hydrolyzes bovine factor X heavy chain, but the cleavage does not produce an activated factor Xa heavy chain. No hydrolysis or activation of plasminogen. The ability to degrade some of the ECM, BM and plasma proteins is likely the main contributor to its hemorrhagic activity. Inhibits platelet aggregation induced by collagen in vitro. Its binding to glycosaminoglycans (GAGs) may assist in concentrating it in the proximity of blood vessel walls enabling in vivo degradation of BM protein components. Cytotoxic to cultured HeLa cancer cells in a concentration- and time-dependent manner. In the solubilized BM preparation (Matrigel), it induces morphological changes in the HeLa cells and inhibits their adhesion, however, the viability of the cells is not reduced. This Vipera ammodytes ammodytes (Western sand viper) protein is Zinc metalloproteinase-disintegrin-like protein H4 subunit A.